The following is a 346-amino-acid chain: [LysW]-lysine/[LysW]-ornithine hydrolase (346 aa).

His-68 contributes to the Zn(2+) binding site. Asp-70 is an active-site residue. Asp-92 lines the Zn(2+) pocket. Glu-122 functions as the Proton acceptor in the catalytic mechanism. Positions 123, 146, and 317 each coordinate Zn(2+).

Belongs to the peptidase M20A family. LysK subfamily. Zn(2+) is required as a cofactor. Requires Co(2+) as cofactor.

The protein resides in the cytoplasm. It catalyses the reaction [amino-group carrier protein]-C-terminal-gamma-(L-lysyl)-L-glutamate + H2O = [amino-group carrier protein]-C-terminal-L-glutamate + L-lysine. The enzyme catalyses [amino-group carrier protein]-C-terminal-gamma-(L-ornithyl)-L-glutamate + H2O = [amino-group carrier protein]-C-terminal-L-glutamate + L-ornithine. The protein operates within amino-acid biosynthesis; L-lysine biosynthesis via AAA pathway; L-lysine from L-alpha-aminoadipate (Thermus route): step 5/5. Its pathway is amino-acid biosynthesis; L-arginine biosynthesis. Functionally, catalyzes the release of L-lysine from [LysW]-gamma-L-lysine and the release of L-ornithine from [LysW]-L-ornithine. This chain is [LysW]-lysine/[LysW]-ornithine hydrolase, found in Saccharolobus islandicus (strain Y.N.15.51 / Yellowstone #2) (Sulfolobus islandicus).